The sequence spans 294 residues: uncharacterized protein (294 aa).

A run of 3 helical transmembrane segments spans residues 21–41, 51–71, and 77–97; these read AIVA…TFTF, PIIW…LWAA, and ILFS…VFLF. Residues 156–176 are disordered; that stretch reads HPVPFPAEPGSPDPVSPPPPI. Positions 184-215 form a coiled coil; sequence ERAESLHAGNIELAEDLQRIQEMERNLENERS. Residues 265–277 are compositionally biased toward basic and acidic residues; the sequence is QQENESRLEERRF. The tract at residues 265–294 is disordered; the sequence is QQENESRLEERRFQSHSTNSLFEADSSRDN.

It localises to the mitochondrion membrane. This is an uncharacterized protein from Arabidopsis thaliana (Mouse-ear cress).